The primary structure comprises 194 residues: Probable calcium-binding protein CML45 (194 aa).

Basic and acidic residues predominate over residues 52–63 (NNKDQQETLTKQ). The interval 52-81 (NNKDQQETLTKQEDDDDDDDDDDDDDDDDI) is disordered. Acidic residues predominate over residues 64–81 (EDDDDDDDDDDDDDDDDI). 3 EF-hand domains span residues 76-98 (DDDD…LGLF), 122-157 (ASLE…LGFK), and 160-194 (SYLD…TSFY). Residues aspartate 135, asparagine 137, aspartate 139, glutamate 146, aspartate 173, asparagine 175, aspartate 177, lysine 179, and glutamate 184 each contribute to the Ca(2+) site.

In terms of biological role, potential calcium sensor. In Arabidopsis thaliana (Mouse-ear cress), this protein is Probable calcium-binding protein CML45.